A 146-amino-acid polypeptide reads, in one-letter code: DNA-binding protein Rv2175c (146 aa).

Residues 1-27 (MPGRAPGSTLARVGSIPAGDDVLDPDE) form a disordered region. Residue threonine 9 is modified to Phosphothreonine.

As to quaternary structure, monomer in solution. May form homodimers. Interacts with phosphorylated PknL. In terms of processing, phosphorylated by PknL. Phosphorylation negatively regulates DNA-binding activity.

Binds DNA at low salt concentrations. This chain is DNA-binding protein Rv2175c, found in Mycobacterium tuberculosis (strain ATCC 25618 / H37Rv).